The primary structure comprises 197 residues: MSNKEQHIEKEEQLQEEKHEEQQKTEETEVEAVNGVDPLEEAILRVQELEAQLTEMVKKEQDFLLRSRAEMDNIRRRAEQDVEKAHKFGLEKFSKDILNTIDNLERALATPANLEDESIKSLFDGVELTLKELLATVSRFGVEAVGVVGETFNPEVHQAISMQPMEGFETNQITVVLQKGYLLNGRVIRPAMVMVAA.

Residues 1–27 (MSNKEQHIEKEEQLQEEKHEEQQKTEE) are compositionally biased toward basic and acidic residues. Residues 1-34 (MSNKEQHIEKEEQLQEEKHEEQQKTEETEVEAVN) form a disordered region.

This sequence belongs to the GrpE family. In terms of assembly, homodimer.

Its subcellular location is the cytoplasm. Its function is as follows. Participates actively in the response to hyperosmotic and heat shock by preventing the aggregation of stress-denatured proteins, in association with DnaK and GrpE. It is the nucleotide exchange factor for DnaK and may function as a thermosensor. Unfolded proteins bind initially to DnaJ; upon interaction with the DnaJ-bound protein, DnaK hydrolyzes its bound ATP, resulting in the formation of a stable complex. GrpE releases ADP from DnaK; ATP binding to DnaK triggers the release of the substrate protein, thus completing the reaction cycle. Several rounds of ATP-dependent interactions between DnaJ, DnaK and GrpE are required for fully efficient folding. The polypeptide is Protein GrpE (Pasteurella multocida (strain Pm70)).